Here is a 260-residue protein sequence, read N- to C-terminus: Methyl-coenzyme M reductase I subunit gamma (260 aa).

Arg-123 is a coenzyme M binding site.

Belongs to the methyl-coenzyme M reductase gamma subunit family. In terms of assembly, MCR is a hexamer of two alpha, two beta, and two gamma chains, forming a dimer of heterotrimers. Coenzyme F430 serves as cofactor.

It is found in the cytoplasm. It carries out the reaction coenzyme B + methyl-coenzyme M = methane + coenzyme M-coenzyme B heterodisulfide. It participates in one-carbon metabolism; methyl-coenzyme M reduction; methane from methyl-coenzyme M: step 1/1. Functionally, component of the methyl-coenzyme M reductase (MCR) I that catalyzes the reductive cleavage of methyl-coenzyme M (CoM-S-CH3 or 2-(methylthio)ethanesulfonate) using coenzyme B (CoB or 7-mercaptoheptanoylthreonine phosphate) as reductant which results in the production of methane and the mixed heterodisulfide of CoB and CoM (CoM-S-S-CoB). This is the final step in methanogenesis. The chain is Methyl-coenzyme M reductase I subunit gamma (mcrG) from Methanocaldococcus jannaschii (strain ATCC 43067 / DSM 2661 / JAL-1 / JCM 10045 / NBRC 100440) (Methanococcus jannaschii).